A 98-amino-acid chain; its full sequence is NADH-ubiquinone oxidoreductase chain 4L (98 aa).

The next 3 helical transmembrane spans lie at 1-21 (MSPM…GLAF), 26-46 (LLSA…ATAT), and 58-78 (ILPM…LAIL).

Belongs to the complex I subunit 4L family.

It localises to the mitochondrion membrane. The enzyme catalyses a ubiquinone + NADH + 5 H(+)(in) = a ubiquinol + NAD(+) + 4 H(+)(out). In terms of biological role, core subunit of the mitochondrial membrane respiratory chain NADH dehydrogenase (Complex I) which catalyzes electron transfer from NADH through the respiratory chain, using ubiquinone as an electron acceptor. Part of the enzyme membrane arm which is embedded in the lipid bilayer and involved in proton translocation. This is NADH-ubiquinone oxidoreductase chain 4L (MT-ND4L) from Scyliorhinus canicula (Small-spotted catshark).